A 204-amino-acid chain; its full sequence is Large ribosomal subunit protein uL4 (204 aa).

The tract at residues Ala-49–Gly-74 is disordered. Residues Val-55–Ala-71 show a composition bias toward gly residues.

The protein belongs to the universal ribosomal protein uL4 family. In terms of assembly, part of the 50S ribosomal subunit.

Functionally, one of the primary rRNA binding proteins, this protein initially binds near the 5'-end of the 23S rRNA. It is important during the early stages of 50S assembly. It makes multiple contacts with different domains of the 23S rRNA in the assembled 50S subunit and ribosome. Its function is as follows. Forms part of the polypeptide exit tunnel. The sequence is that of Large ribosomal subunit protein uL4 from Wolinella succinogenes (strain ATCC 29543 / DSM 1740 / CCUG 13145 / JCM 31913 / LMG 7466 / NCTC 11488 / FDC 602W) (Vibrio succinogenes).